Consider the following 502-residue polypeptide: Glycerol kinase (502 aa).

Thr14 contributes to the ADP binding site. Positions 14, 15, and 16 each coordinate ATP. Thr14 contributes to the sn-glycerol 3-phosphate binding site. Arg18 contacts ADP. Residues Arg84, Glu85, and Tyr136 each contribute to the sn-glycerol 3-phosphate site. Positions 84, 85, and 136 each coordinate glycerol. His232 carries the post-translational modification Phosphohistidine; by HPr. Asp246 is a sn-glycerol 3-phosphate binding site. 2 residues coordinate glycerol: Asp246 and Gln247. The ADP site is built by Thr268 and Gly311. Thr268, Gly311, Gln315, and Gly412 together coordinate ATP. Residues Gly412 and Asn416 each contribute to the ADP site.

The protein belongs to the FGGY kinase family. Homotetramer and homodimer (in equilibrium). Post-translationally, the phosphoenolpyruvate-dependent sugar phosphotransferase system (PTS), including enzyme I, and histidine-containing protein (HPr) are required for the phosphorylation, which leads to the activation of the enzyme.

It carries out the reaction glycerol + ATP = sn-glycerol 3-phosphate + ADP + H(+). It functions in the pathway polyol metabolism; glycerol degradation via glycerol kinase pathway; sn-glycerol 3-phosphate from glycerol: step 1/1. With respect to regulation, activated by phosphorylation and inhibited by fructose 1,6-bisphosphate (FBP). Functionally, key enzyme in the regulation of glycerol uptake and metabolism. Catalyzes the phosphorylation of glycerol to yield sn-glycerol 3-phosphate. The protein is Glycerol kinase of Streptococcus pneumoniae (strain 70585).